The primary structure comprises 290 residues: Enoyl-CoA hydratase, mitochondrial (290 aa).

The N-terminal 27 residues, 1–27 (MAALRALLPRACSSLLSSVRCPELRRF), are a transit peptide targeting the mitochondrion. A substrate-binding site is contributed by 98 to 101 (ADIK). Lysine 101 carries the N6-acetyllysine; alternate modification. Lysine 101 is modified (N6-succinyllysine; alternate). A Phosphoserine modification is found at serine 114. Position 115 is an N6-acetyllysine; alternate (lysine 115). Lysine 115 is subject to N6-succinyllysine; alternate. Residue glycine 141 participates in substrate binding. An N6-succinyllysine modification is found at lysine 204. The residue at position 211 (lysine 211) is an N6-acetyllysine. Lysine 217 is modified (N6-acetyllysine; alternate). Residue lysine 217 is modified to N6-succinyllysine; alternate.

Belongs to the enoyl-CoA hydratase/isomerase family. In terms of assembly, homohexamer; dimer of trimers. Acetylation of Lys-101 is observed in liver mitochondria from fasted mice but not from fed mice.

It localises to the mitochondrion matrix. It carries out the reaction a (3S)-3-hydroxyacyl-CoA = a (2E)-enoyl-CoA + H2O. The enzyme catalyses a (3E)-enoyl-CoA = a 4-saturated (2E)-enoyl-CoA. It catalyses the reaction (3E)-hexenoyl-CoA = (2E)-hexenoyl-CoA. The catalysed reaction is (3S)-3-hydroxybutanoyl-CoA = (2E)-butenoyl-CoA + H2O. It carries out the reaction 3-hydroxyisovaleryl-CoA = 3-methylbut-2-enoyl-CoA + H2O. The enzyme catalyses 3-hydroxypropanoyl-CoA = acryloyl-CoA + H2O. It catalyses the reaction 3-hydroxybutanoyl-CoA = (2E)-butenoyl-CoA + H2O. The catalysed reaction is 2-methylpropenoyl-CoA + H2O = (S)-3-hydroxyisobutanoyl-CoA. It carries out the reaction (3S)-hydroxyhexanoyl-CoA = (2E)-hexenoyl-CoA + H2O. The enzyme catalyses (3S)-hydroxydecanoyl-CoA = (2E)-decenoyl-CoA + H2O. It functions in the pathway lipid metabolism; fatty acid beta-oxidation. In terms of biological role, converts unsaturated trans-2-enoyl-CoA species ((2E)-enoyl-CoA) to the corresponding (3S)-3-hydroxyacyl-CoA species through addition of a water molecule to the double bond. Catalyzes the hydration of medium- and short-chained fatty enoyl-CoA thioesters from 4 carbons long (C4) up to C16. Has high substrate specificity for crotonyl-CoA ((2E)-butenoyl-CoA) and moderate specificity for acryloyl-CoA, 3-methylcrotonyl-CoA (3-methyl-(2E)-butenoyl-CoA) and methacrylyl-CoA ((2E)-2-methylpropenoyl-CoA). Can bind tiglyl-CoA (2-methylcrotonoyl-CoA), but hydrates only a small amount of this substrate. Plays a key role in the beta-oxidation spiral of short- and medium-chain fatty acid oxidation. At a lower rate than the hydratase reaction, catalyzes the isomerase reaction of trans-3-enoyl-CoA species (such as (3E)-hexenoyl-CoA) to trans-2-enoyl-CoA species (such as (2E)-hexenoyl-CoA), which are subsequently hydrated to 3(S)-3-hydroxyacyl-CoA species (such as (3S)-hydroxyhexanoyl-CoA). The protein is Enoyl-CoA hydratase, mitochondrial of Mus musculus (Mouse).